A 284-amino-acid chain; its full sequence is D-tagatose-1,6-bisphosphate aldolase subunit GatY (284 aa).

The active-site Proton donor is the D82. Residues H83 and H180 each contribute to the Zn(2+) site. C181 is a dihydroxyacetone phosphate binding site. Position 208 (H208) interacts with Zn(2+). Dihydroxyacetone phosphate contacts are provided by residues 209-211 (GAS) and 230-233 (NVAT).

The protein belongs to the class II fructose-bisphosphate aldolase family. TagBP aldolase GatY subfamily. Forms a complex with GatZ. Zn(2+) serves as cofactor.

It carries out the reaction D-tagatofuranose 1,6-bisphosphate = D-glyceraldehyde 3-phosphate + dihydroxyacetone phosphate. The protein operates within carbohydrate metabolism; D-tagatose 6-phosphate degradation; D-glyceraldehyde 3-phosphate and glycerone phosphate from D-tagatose 6-phosphate: step 2/2. Catalytic subunit of the tagatose-1,6-bisphosphate aldolase GatYZ, which catalyzes the reversible aldol condensation of dihydroxyacetone phosphate (DHAP or glycerone-phosphate) with glyceraldehyde 3-phosphate (G3P) to produce tagatose 1,6-bisphosphate (TBP). Requires GatZ subunit for full activity and stability. Is involved in the catabolism of galactitol. The polypeptide is D-tagatose-1,6-bisphosphate aldolase subunit GatY (Salmonella paratyphi A (strain ATCC 9150 / SARB42)).